A 205-amino-acid polypeptide reads, in one-letter code: Golgi apparatus membrane protein TVP23 homolog B (205 aa).

N-acetylmethionine is present on methionine 1. The disordered stretch occupies residues 1–21 (MLQQDSNDDTEDVSLFDAEEE). Helical transmembrane passes span 34 to 53 (PVAS…VYLL), 54 to 72 (CGLL…ILLL), 126 to 146 (IFWL…FSAL), and 152 to 172 (KWLA…YGYI).

This sequence belongs to the TVP23 family.

The protein resides in the membrane. The protein is Golgi apparatus membrane protein TVP23 homolog B (TVP23B) of Homo sapiens (Human).